The sequence spans 124 residues: Small ribosomal subunit protein uS12 (124 aa).

A disordered region spans residues 105 to 124 (QGVKNRKQARSRYGAKKEKG). The segment covering 108-118 (KNRKQARSRYG) has biased composition (basic residues).

This sequence belongs to the universal ribosomal protein uS12 family. Part of the 30S ribosomal subunit. Contacts proteins S8 and S17. May interact with IF1 in the 30S initiation complex.

In terms of biological role, with S4 and S5 plays an important role in translational accuracy. Functionally, interacts with and stabilizes bases of the 16S rRNA that are involved in tRNA selection in the A site and with the mRNA backbone. Located at the interface of the 30S and 50S subunits, it traverses the body of the 30S subunit contacting proteins on the other side and probably holding the rRNA structure together. The combined cluster of proteins S8, S12 and S17 appears to hold together the shoulder and platform of the 30S subunit. The sequence is that of Small ribosomal subunit protein uS12 (rpsL) from Mycobacterium bovis (strain ATCC BAA-935 / AF2122/97).